The sequence spans 66 residues: Large ribosomal subunit protein bL35 (66 aa).

The span at 1 to 26 (MPKMKTHRGSAKRFKKTGSGKLKRSH) shows a compositional bias: basic residues. The segment at 1-48 (MPKMKTHRGSAKRFKKTGSGKLKRSHAYTSHLFANKSQKQKRKLRKSA) is disordered.

It belongs to the bacterial ribosomal protein bL35 family. As to quaternary structure, part of the 50S ribosomal subunit.

The protein is Large ribosomal subunit protein bL35 of Bacillus subtilis (strain 168).